The primary structure comprises 882 residues: Valine--tRNA ligase (882 aa).

The 'HIGH' region motif lies at 45-55 (PNVTGSLHIGH). Residues 525–529 (KFSKS) carry the 'KMSKS' region motif. Lys528 contributes to the ATP binding site. The stretch at 812-881 (EGLIDVAKEK…VLKKGIQNLA (70 aa)) forms a coiled coil.

This sequence belongs to the class-I aminoacyl-tRNA synthetase family. ValS type 1 subfamily. Monomer.

The protein resides in the cytoplasm. The catalysed reaction is tRNA(Val) + L-valine + ATP = L-valyl-tRNA(Val) + AMP + diphosphate. In terms of biological role, catalyzes the attachment of valine to tRNA(Val). As ValRS can inadvertently accommodate and process structurally similar amino acids such as threonine, to avoid such errors, it has a 'posttransfer' editing activity that hydrolyzes mischarged Thr-tRNA(Val) in a tRNA-dependent manner. This chain is Valine--tRNA ligase, found in Leptospira interrogans serogroup Icterohaemorrhagiae serovar copenhageni (strain Fiocruz L1-130).